The sequence spans 205 residues: Large ribosomal subunit protein uL4 (205 aa).

A disordered region spans residues 44–79; the sequence is RAGTKAQKTRREVSGGGAKPWRQKGTGRARAGSSRS.

The protein belongs to the universal ribosomal protein uL4 family. As to quaternary structure, part of the 50S ribosomal subunit.

In terms of biological role, one of the primary rRNA binding proteins, this protein initially binds near the 5'-end of the 23S rRNA. It is important during the early stages of 50S assembly. It makes multiple contacts with different domains of the 23S rRNA in the assembled 50S subunit and ribosome. Forms part of the polypeptide exit tunnel. This is Large ribosomal subunit protein uL4 from Coxiella burnetii (strain RSA 331 / Henzerling II).